We begin with the raw amino-acid sequence, 129 residues long: uncharacterized protein (129 aa).

Residues 1 to 28 are Cytoplasmic-facing; sequence MAGTLFIILRFVDTTLPSSRVYCVRSLE. The helical transmembrane segment at 29–49 threads the bilayer; sequence VSVAVELAAATVLAFESIGVV. Over 50–54 the chain is Extracellular; that stretch reads DDCGR. A helical membrane pass occupies residues 55–75; the sequence is SVLFSIILIAAFICSVFLIAS. Topologically, residues 76-129 are cytoplasmic; it reads EDIAGSRRSTGSCVTLWEGRNISFCLYRSNWLNTVPVGYMFFLRKNRSLDERYF.

It is found in the membrane. This is an uncharacterized protein from Saccharomyces cerevisiae (strain ATCC 204508 / S288c) (Baker's yeast).